A 450-amino-acid chain; its full sequence is Sensor histidine kinase EnvZ (450 aa).

Topologically, residues 1-15 are cytoplasmic; the sequence is MRRLRFSPRSSFART. The chain crosses the membrane as a helical span at residues 16–35; sequence LLLIVTLLFASLVTTYLVVL. At 36–158 the chain is on the periplasmic side; that stretch reads NFAILPSLQQ…LTEIHQGDFS (123 aa). The short motif at 71 to 75 is the polyP-periplasmic motif element; the sequence is VVPPA. Residues 159–179 traverse the membrane as a helical segment; the sequence is PLFRYTLAIMLLAIGGAWLFI. One can recognise an HAMP domain in the interval 180 to 232; the sequence is RIQNRPLVDLEHAALQVGKGIIPPPLREYGASEVRSVTRAFNHMAAGVKQLAD. The Cytoplasmic segment spans residues 180–450; the sequence is RIQNRPLVDL…TRAQGTTKEG (271 aa). The polyP-cytoplasmic motif motif lies at 201–205; the sequence is IPPPL. Residues 223–289 form a cytoplasmic dimerization domain (CDD), when dimerized forms osmosensitive core region; sequence MAAGVKQLAD…IIEQFIDYLR (67 aa). The Histidine kinase domain maps to 240–440; it reads GVSHDLRTPL…SIRAWLPVPV (201 aa). ATP is bound by residues H243, 347 to 351, D373, 392 to 393, and 402 to 406; these read NAARY, RG, and TGLGL. Phosphohistidine; by autocatalysis is present on H243.

As to quaternary structure, homodimer. Interacts with MzrA. Post-translationally, autophosphorylated. Incubation of isolated EnvZ C-terminal fragment (residues 180-450) with increasing levels of NaCl or sucrose increases its autophosphorylation.

The protein localises to the cell inner membrane. The catalysed reaction is ATP + protein L-histidine = ADP + protein N-phospho-L-histidine.. Activity is modulated by MzrA. In the presence of 0.2 M NaCl, 2.0 mM sodium cholate (bile salts) decreases expression from the ompC promoter; how this is mediated is unknown. Autophosphorylation is inhibited by the angucycline antibiotic waldiomycin in a non-competitive manner; waldiomycin prevents dimerization of the cytoplasmic domain and autophosphorylation. Member of the two-component regulatory system EnvZ/OmpR involved in osmoregulation (particularly of genes ompF and ompC) as well as other genes. EnvZ functions as a membrane-associated protein kinase that phosphorylates OmpR in response to environmental signals; at low osmolarity OmpR activates ompF transcription, while at high osmolarity it represses ompF and activates ompC transcription. Also dephosphorylates OmpR in the presence of ATP. The cytoplasmic dimerization domain (CDD) forms an osmosensitive core; increasing osmolarity stabilizes this segment (possibly by its contraction), enhancing the autophosphorylation rate and consequently, downstream phosphotransfer to OmpR and signaling. Autophosphorylation is greater when full-length EnvZ is reconstituted in a lipid environment, lipid-mediated allostery impacts the kinase function of EnvZ. Involved in acid stress response; this requires EnvZ but not OmpR phosphorylation, and suggests that EnvZ senses cytoplasmic acidic pH. The chain is Sensor histidine kinase EnvZ (envZ) from Escherichia coli (strain K12).